Here is a 99-residue protein sequence, read N- to C-terminus: Beta-2-microglobulin (99 aa).

In terms of domain architecture, Ig-like C1-type spans 5–92 (PNVQVYSRHP…KHVTLKEPMT (88 aa)). A disulfide bond links Cys25 and Cys80.

Belongs to the beta-2-microglobulin family. In terms of assembly, heterodimer of an alpha chain and a beta chain. Beta-2-microglobulin is the beta-chain of major histocompatibility complex class I molecules.

It localises to the secreted. Functionally, component of the class I major histocompatibility complex (MHC). Involved in the presentation of peptide antigens to the immune system. This is Beta-2-microglobulin (B2M) from Oryctolagus cuniculus (Rabbit).